Reading from the N-terminus, the 673-residue chain is UvrABC system protein B (673 aa).

The 158-residue stretch at 26 to 183 (EGLEDGLAHQ…RRLAELQYAR (158 aa)) folds into the Helicase ATP-binding domain. 39–46 (GVTGSGKT) provides a ligand contact to ATP. Positions 92–115 (YYDYYQPEAYVPSSDTFIEKDASV) match the Beta-hairpin motif. The region spanning 431–597 (QVDDLLSEIR…GLNKKVVDIL (167 aa)) is the Helicase C-terminal domain. Residues 633–668 (QQKIHELEGLMMQHAQNLEFEEAAQVRDQLHQLRQL) enclose the UVR domain.

The protein belongs to the UvrB family. As to quaternary structure, forms a heterotetramer with UvrA during the search for lesions. Interacts with UvrC in an incision complex.

The protein localises to the cytoplasm. The UvrABC repair system catalyzes the recognition and processing of DNA lesions. A damage recognition complex composed of 2 UvrA and 2 UvrB subunits scans DNA for abnormalities. Upon binding of the UvrA(2)B(2) complex to a putative damaged site, the DNA wraps around one UvrB monomer. DNA wrap is dependent on ATP binding by UvrB and probably causes local melting of the DNA helix, facilitating insertion of UvrB beta-hairpin between the DNA strands. Then UvrB probes one DNA strand for the presence of a lesion. If a lesion is found the UvrA subunits dissociate and the UvrB-DNA preincision complex is formed. This complex is subsequently bound by UvrC and the second UvrB is released. If no lesion is found, the DNA wraps around the other UvrB subunit that will check the other stand for damage. This Enterobacter sp. (strain 638) protein is UvrABC system protein B.